The sequence spans 929 residues: Valine--tRNA ligase (929 aa).

Residues 40 to 50 carry the 'HIGH' region motif; it reads PNVTGHLHMGH. Residues 522 to 526 carry the 'KMSKS' region motif; the sequence is KMSKS. Position 525 (lysine 525) interacts with ATP. Residues 855-926 adopt a coiled-coil conformation; sequence LAGLIDKEAE…LEQQHAEITD (72 aa).

Belongs to the class-I aminoacyl-tRNA synthetase family. ValS type 1 subfamily. Monomer.

The protein resides in the cytoplasm. It carries out the reaction tRNA(Val) + L-valine + ATP = L-valyl-tRNA(Val) + AMP + diphosphate. Catalyzes the attachment of valine to tRNA(Val). As ValRS can inadvertently accommodate and process structurally similar amino acids such as threonine, to avoid such errors, it has a 'posttransfer' editing activity that hydrolyzes mischarged Thr-tRNA(Val) in a tRNA-dependent manner. This chain is Valine--tRNA ligase, found in Nitrosococcus oceani (strain ATCC 19707 / BCRC 17464 / JCM 30415 / NCIMB 11848 / C-107).